A 285-amino-acid polypeptide reads, in one-letter code: Orotidine 5'-phosphate decarboxylase (285 aa).

Substrate is bound by residues aspartate 40, 62 to 64 (KTH), 93 to 102 (DRKFVDIGST), tyrosine 235, and arginine 253. Lysine 95 serves as the catalytic Proton donor.

It belongs to the OMP decarboxylase family.

It catalyses the reaction orotidine 5'-phosphate + H(+) = UMP + CO2. Its pathway is pyrimidine metabolism; UMP biosynthesis via de novo pathway; UMP from orotate: step 2/2. This Paracoccidioides brasiliensis protein is Orotidine 5'-phosphate decarboxylase (URA3).